A 146-amino-acid polypeptide reads, in one-letter code: MPLVPKRVKHRREFRGKMRGAAKGGKYIAFGEYGLEALESHWITNRQIEAARVAMTRYMKRGGKVWIRIFPQKSYTAKGVGVRMGSGKGAPAGWVAVVKREKILFEIGGVSEEVAREALRLASTKLPIKTKFVTRSSEVGGESNEG.

The protein belongs to the universal ribosomal protein uL16 family. In terms of assembly, part of the 50S ribosomal subunit.

Functionally, binds 23S rRNA and is also seen to make contacts with the A and possibly P site tRNAs. This Lactobacillus acidophilus (strain ATCC 700396 / NCK56 / N2 / NCFM) protein is Large ribosomal subunit protein uL16.